A 272-amino-acid chain; its full sequence is Undecaprenyl-diphosphatase (272 aa).

The next 7 membrane-spanning stretches (helical) occupy residues Ser-6–Ser-26, Ala-45–Trp-65, Thr-92–Ile-112, Leu-115–Ala-135, Tyr-189–Leu-209, Ala-221–Ile-241, and Ile-251–Phe-271.

This sequence belongs to the UppP family.

Its subcellular location is the cell inner membrane. It catalyses the reaction di-trans,octa-cis-undecaprenyl diphosphate + H2O = di-trans,octa-cis-undecaprenyl phosphate + phosphate + H(+). Catalyzes the dephosphorylation of undecaprenyl diphosphate (UPP). Confers resistance to bacitracin. This chain is Undecaprenyl-diphosphatase, found in Pectobacterium atrosepticum (strain SCRI 1043 / ATCC BAA-672) (Erwinia carotovora subsp. atroseptica).